The sequence spans 579 residues: 2-isopropylmalate synthase (579 aa).

One can recognise a Pyruvate carboxyltransferase domain in the interval Pro40 to Asp314. Mg(2+)-binding residues include Asp49, His253, His255, and Asn289. The regulatory domain stretch occupies residues Ser456–Ala579.

The protein belongs to the alpha-IPM synthase/homocitrate synthase family. LeuA type 2 subfamily. As to quaternary structure, homodimer. The cofactor is Mg(2+).

It localises to the cytoplasm. The enzyme catalyses 3-methyl-2-oxobutanoate + acetyl-CoA + H2O = (2S)-2-isopropylmalate + CoA + H(+). Its pathway is amino-acid biosynthesis; L-leucine biosynthesis; L-leucine from 3-methyl-2-oxobutanoate: step 1/4. Catalyzes the condensation of the acetyl group of acetyl-CoA with 3-methyl-2-oxobutanoate (2-ketoisovalerate) to form 3-carboxy-3-hydroxy-4-methylpentanoate (2-isopropylmalate). The chain is 2-isopropylmalate synthase from Arthrobacter sp. (strain FB24).